The following is a 212-amino-acid chain: External core antigen (212 aa).

The signal sequence occupies residues 1 to 19; the sequence is MQLFHLCLIISCSCPTVQA. The interval 25 to 27 is HBEAG; that stretch reads GWL. The disordered stretch occupies residues 165–212; it reads NAPILSTLPETTVVRRRGRSPRRRTPSPRRRRSQSPRRRRSQSRESQC. Basic residues predominate over residues 178–205; it reads VRRRGRSPRRRTPSPRRRRSQSPRRRRS. A 1; half-length repeat occupies 184 to 190; sequence SPRRRTP. The segment at 184-206 is 3 X 8 AA repeats of S-P-R-R-R-R-S-Q; sequence SPRRRTPSPRRRRSQSPRRRRSQ. The propeptide occupies 184 to 212; it reads SPRRRTPSPRRRRSQSPRRRRSQSRESQC. 2 repeat units span residues 191-198 and 199-206.

This sequence belongs to the orthohepadnavirus precore antigen family. As to quaternary structure, homodimerizes. Phosphorylated. In terms of processing, cleaved by host furin.

Its subcellular location is the secreted. The protein resides in the host nucleus. Its function is as follows. May regulate immune response to the intracellular capsid in acting as a T-cell tolerogen, by having an immunoregulatory effect which prevents destruction of infected cells by cytotoxic T-cells. This immune regulation may predispose to chronicity during perinatal infections and prevent severe liver injury during adult infections. In Homo sapiens (Human), this protein is External core antigen.